A 334-amino-acid polypeptide reads, in one-letter code: Tryptophan--tRNA ligase (334 aa).

Residues 11–13 and 19–20 each bind ATP; these read QPS and GN. The 'HIGH' region motif lies at 12-20; sequence PSGELTIGN. L-tryptophan is bound at residue aspartate 135. ATP-binding positions include 147–149, valine 186, and 195–199; these read GED and KMSKS. Residues 195–199 carry the 'KMSKS' region motif; sequence KMSKS.

Belongs to the class-I aminoacyl-tRNA synthetase family. As to quaternary structure, homodimer.

It localises to the cytoplasm. The catalysed reaction is tRNA(Trp) + L-tryptophan + ATP = L-tryptophyl-tRNA(Trp) + AMP + diphosphate + H(+). Functionally, catalyzes the attachment of tryptophan to tRNA(Trp). The sequence is that of Tryptophan--tRNA ligase from Salmonella typhi.